Reading from the N-terminus, the 214-residue chain is Redox-sensing transcriptional repressor Rex (214 aa).

The H-T-H motif DNA-binding region spans 17 to 56 (LYYRIFKRFHADQVEKASSKQIADAMGIDSATVRRDFSYF). Residue 91–96 (GCGNIG) participates in NAD(+) binding.

This sequence belongs to the transcriptional regulatory Rex family. In terms of assembly, homodimer.

The protein resides in the cytoplasm. Modulates transcription in response to changes in cellular NADH/NAD(+) redox state. In Streptococcus pyogenes serotype M4 (strain MGAS10750), this protein is Redox-sensing transcriptional repressor Rex.